Consider the following 296-residue polypeptide: Bifunctional protein FolD (296 aa).

NADP(+)-binding positions include 166–168 (GRS), serine 195, and threonine 236.

Belongs to the tetrahydrofolate dehydrogenase/cyclohydrolase family. As to quaternary structure, homodimer.

The catalysed reaction is (6R)-5,10-methylene-5,6,7,8-tetrahydrofolate + NADP(+) = (6R)-5,10-methenyltetrahydrofolate + NADPH. It carries out the reaction (6R)-5,10-methenyltetrahydrofolate + H2O = (6R)-10-formyltetrahydrofolate + H(+). It functions in the pathway one-carbon metabolism; tetrahydrofolate interconversion. In terms of biological role, catalyzes the oxidation of 5,10-methylenetetrahydrofolate to 5,10-methenyltetrahydrofolate and then the hydrolysis of 5,10-methenyltetrahydrofolate to 10-formyltetrahydrofolate. The sequence is that of Bifunctional protein FolD from Dehalococcoides mccartyi (strain CBDB1).